Here is a 331-residue protein sequence, read N- to C-terminus: 6-phosphogluconolactonase (331 aa).

The protein belongs to the cycloisomerase 2 family.

The catalysed reaction is 6-phospho-D-glucono-1,5-lactone + H2O = 6-phospho-D-gluconate + H(+). It functions in the pathway carbohydrate degradation; pentose phosphate pathway; D-ribulose 5-phosphate from D-glucose 6-phosphate (oxidative stage): step 2/3. Functionally, catalyzes the hydrolysis of 6-phosphogluconolactone to 6-phosphogluconate. The chain is 6-phosphogluconolactonase from Salmonella agona (strain SL483).